Here is a 647-residue protein sequence, read N- to C-terminus: Homologous recombination OB-fold protein (647 aa).

Serine 47 is modified (phosphoserine). Disordered regions lie at residues 284-361, 380-399, and 581-631; these read ARGT…GPQG, SRTP…RRFP, and SFLK…DDLD. Asymmetric dimethylarginine is present on residues arginine 285, arginine 295, arginine 329, and arginine 337. The segment covering 287-308 has biased composition (polar residues); it reads TIQSSPQNRFPCQPFQSPSSWL. A compositionally biased stretch (low complexity) spans 319–332; it reads TPNSSCSTPSRTSS. The segment covering 380–390 has biased composition (polar residues); sequence SRTPQQPTHPS. The segment covering 618 to 631 has biased composition (acidic residues); sequence ASPEEELPEADDLD.

As to quaternary structure, interacts with MCM8; this interaction is necessary for MCM8-MCM9 helicase complex recruitment to DNA damage sites. Interacts with RPA1; this interaction associates HROB with the RPA complex.

It localises to the nucleus. The protein localises to the chromosome. Its function is as follows. DNA-binding protein involved in homologous recombination that acts by recruiting the MCM8-MCM9 helicase complex to sites of DNA damage to promote DNA repair synthesis. The sequence is that of Homologous recombination OB-fold protein from Homo sapiens (Human).